A 121-amino-acid polypeptide reads, in one-letter code: Large ribosomal subunit protein uL18 (121 aa).

Belongs to the universal ribosomal protein uL18 family. Part of the 50S ribosomal subunit; part of the 5S rRNA/L5/L18/L25 subcomplex. Contacts the 5S and 23S rRNAs.

Its function is as follows. This is one of the proteins that bind and probably mediate the attachment of the 5S RNA into the large ribosomal subunit, where it forms part of the central protuberance. The sequence is that of Large ribosomal subunit protein uL18 from Paraburkholderia phytofirmans (strain DSM 17436 / LMG 22146 / PsJN) (Burkholderia phytofirmans).